Consider the following 644-residue polypeptide: Uromodulin (644 aa).

Residues 1–26 form the signal peptide; it reads MGQLLSLTWLLLVMVVTPWFTVAGAN. Residues 30 to 66 enclose the EGF-like 1 domain; it reads EARRCSECHDNATCVLDGVVTTCSCQAGFTGDGLVCE. 21 cysteine pairs are disulfide-bonded: Cys-34/Cys-43, Cys-37/Cys-52, Cys-54/Cys-65, Cys-71/Cys-84, Cys-79/Cys-93, Cys-95/Cys-107, Cys-113/Cys-127, Cys-121/Cys-136, Cys-138/Cys-149, Cys-151/Cys-162, Cys-156/Cys-173, Cys-177/Cys-270, Cys-198/Cys-285, Cys-220/Cys-258, Cys-226/Cys-290, Cys-251/Cys-259, Cys-300/Cys-309, Cys-303/Cys-318, Cys-320/Cys-350, Cys-338/Cys-428, and Cys-369/Cys-392. An N-linked (GlcNAc...) asparagine glycan is attached at Asn-40. Residues 67 to 108 form the EGF-like 2; calcium-binding domain; that stretch reads DIDECATPWTHNCSNSICMNTLGSYECSCQDGFRLTPGLGCI. N-linked (GlcNAc...) asparagine glycosylation is present at Asn-78. An EGF-like 3; calcium-binding domain is found at 109–150; that stretch reads DVNECTEQGLSNCHSLATCVNTEGSYSCVCPKGYRGDGWYCE. The interval 151–174 is beta hairpin; the sequence is CSPGFCEPGLDCLPQGPSGKLVCQ. The segment at 175-294 is D10C; it reads DPCNVYETLT…CNLAYCTDPS (120 aa). Asn-235 is a glycosylation site (N-linked (GlcNAc...) asparagine). A glycan (N-linked (GlcNAc...) asparagine) is linked at Asn-278. Residues 295-326 enclose the EGF-like 4 domain; the sequence is SVEGTCEECGVDEDCVSDNGRWRCQCKQDFNV. N-linked (GlcNAc...) asparagine glycosylation is present at Asn-325. Positions 337 to 432 are ZP-N; sequence ECEANEIKIS…RINFECSYPL (96 aa). In terms of domain architecture, ZP spans 337–592; the sequence is ECEANEIKIS…PTCSGTRYRS (256 aa). Residues Asn-399 and Asn-450 are each glycosylated (N-linked (GlcNAc...) asparagine). The interval 433–456 is flexible ZP-N/ZP-C linker; important for secretion and polymerization into filaments; sequence DMKVSLKTSLQPMVSALNISLGGT. Residues 457 to 467 are internal hydrophobic patch (IHP); the sequence is GKFTVQMALFQ. A ZP-C region spans residues 457-592; that stretch reads GKFTVQMALF…PTCSGTRYRS (136 aa). Disulfide bonds link Cys-509–Cys-569, Cys-530–Cys-585, and Cys-574–Cys-581. Asn-516 carries N-linked (GlcNAc...) asparagine glycosylation. The tract at residues 589–592 is essential for cleavage by HPN; sequence RYRS. The segment at 601–609 is external hydrophobic patch (EHP); regulates polymerization into filaments; sequence VLNLGPITR. The GPI-anchor amidated serine moiety is linked to residue Ser-615. A propeptide spans 616–644 (removed in mature form); the sequence is VSKAASSNLGFLSIWLLLFLSATLTLMVH.

Homodimer that then polymerizes into long filaments. The filaments can additionally assemble laterally to form a sheet. The filaments consist of a zigzag-shaped backbone with laterally protruding arms which interact with bacterial adhesin fimH. Two fimH molecules can bind to a single UMOD monomer. Post-translationally, N-glycosylated. In terms of processing, proteolytically cleaved at a conserved C-terminal proteolytic cleavage site to generate the secreted form found in urine. This cleavage is catalyzed by HPN. In terms of tissue distribution, expression restricted to the thick ascending limb of the loop of Henle (TALH).

The protein localises to the apical cell membrane. The protein resides in the basolateral cell membrane. It is found in the cell projection. It localises to the cilium membrane. Its subcellular location is the secreted. Its function is as follows. Functions in biogenesis and organization of the apical membrane of epithelial cells of the thick ascending limb of Henle's loop (TALH), where it promotes formation of complex filamentous gel-like structure that may play a role in the water barrier permeability. May serve as a receptor for binding and endocytosis of cytokines (IL-1, IL-2) and TNF. Facilitates neutrophil migration across renal epithelia. Functionally, in the urine, may contribute to colloid osmotic pressure, retards passage of positively charged electrolytes, and inhibits formation of liquid containing supersaturated salts and subsequent formation of salt crystals. Protects against urinary tract infections by binding to type 1 fimbriated E.coli. Binds to bacterial adhesin fimH which mediates the stable formation of bacterial aggregates, prevents the binding of E.coli to uroplakins UPK1A and UPK1B which act as urothelial receptors for type I fimbriae, and allows for pathogen clearance through micturation. Also promotes aggregation of other bacteria including K.pneumoniae, P.aeruginosa and S.mitis and so may also protect against other uropathogens. The protein is Uromodulin (Umod) of Rattus norvegicus (Rat).